Here is a 500-residue protein sequence, read N- to C-terminus: Adenylosuccinate synthetase, chloroplastic (500 aa).

Residues glycine 87 to lysine 93 and glycine 115 to threonine 117 each bind GTP. The active-site Proton acceptor is aspartate 88. The Mg(2+) site is built by aspartate 88 and glycine 115. Residues aspartate 88–lysine 91, asparagine 113–histidine 116, threonine 205, arginine 219, glutamine 299, threonine 314, and arginine 378 each bind IMP. The active-site Proton donor is histidine 116. Threonine 374–arginine 380 lines the substrate pocket. GTP contacts are provided by residues arginine 380, lysine 406–aspartate 408, and glycine 489–glycine 491.

It belongs to the adenylosuccinate synthetase family. Homodimer. Mg(2+) serves as cofactor.

Its subcellular location is the plastid. The protein localises to the chloroplast. It catalyses the reaction IMP + L-aspartate + GTP = N(6)-(1,2-dicarboxyethyl)-AMP + GDP + phosphate + 2 H(+). Its pathway is purine metabolism; AMP biosynthesis via de novo pathway; AMP from IMP: step 1/2. Plays an important role in the de novo pathway and in the salvage pathway of purine nucleotide biosynthesis. Catalyzes the first committed step in the biosynthesis of AMP from IMP. The chain is Adenylosuccinate synthetase, chloroplastic from Solanum bulbocastanum (Wild potato).